The primary structure comprises 208 residues: Protein-L-isoaspartate O-methyltransferase (208 aa).

The active site involves Ser-59.

It belongs to the methyltransferase superfamily. L-isoaspartyl/D-aspartyl protein methyltransferase family.

Its subcellular location is the cytoplasm. The enzyme catalyses [protein]-L-isoaspartate + S-adenosyl-L-methionine = [protein]-L-isoaspartate alpha-methyl ester + S-adenosyl-L-homocysteine. Functionally, catalyzes the methyl esterification of L-isoaspartyl residues in peptides and proteins that result from spontaneous decomposition of normal L-aspartyl and L-asparaginyl residues. It plays a role in the repair and/or degradation of damaged proteins. This chain is Protein-L-isoaspartate O-methyltransferase, found in Escherichia coli (strain K12 / MC4100 / BW2952).